The sequence spans 287 residues: Transcription cofactor vestigial-like protein 4 (287 aa).

2 disordered regions span residues 44-68 and 251-287; these read ASAL…SMEP and AAKD…SVVS. Phosphoserine is present on residues S58 and S271. The segment covering 275–287 has biased composition (low complexity); that stretch reads HMVSHSHSPSVVS.

This sequence belongs to the vestigial family. In terms of assembly, interacts with TEFs. Interacts with IRF2BP2.

Its subcellular location is the nucleus. Its function is as follows. May act as a specific coactivator for the mammalian TEFs. The chain is Transcription cofactor vestigial-like protein 4 (Vgll4) from Mus musculus (Mouse).